The following is a 907-amino-acid chain: Protein translocase subunit SecA (907 aa).

ATP is bound by residues Gln-87, 105–109, and Asp-512; that span reads GEGKT. Positions 834-907 are disordered; the sequence is QEDVERMEEQ…KKYKQCHGKI (74 aa). Composition is skewed to basic and acidic residues over residues 836–853 and 873–888; these read DVER…EAAR and EEAH…KVGR. Zn(2+) is bound by residues Cys-892, Cys-894, Cys-903, and His-904. The segment covering 898-907 has biased composition (basic residues); that stretch reads KKYKQCHGKI.

The protein belongs to the SecA family. As to quaternary structure, monomer and homodimer. Part of the essential Sec protein translocation apparatus which comprises SecA, SecYEG and auxiliary proteins SecDF-YajC and YidC. Requires Zn(2+) as cofactor.

It localises to the cell inner membrane. The protein localises to the cytoplasm. It catalyses the reaction ATP + H2O + cellular proteinSide 1 = ADP + phosphate + cellular proteinSide 2.. Part of the Sec protein translocase complex. Interacts with the SecYEG preprotein conducting channel. Has a central role in coupling the hydrolysis of ATP to the transfer of proteins into and across the cell membrane, serving both as a receptor for the preprotein-SecB complex and as an ATP-driven molecular motor driving the stepwise translocation of polypeptide chains across the membrane. This is Protein translocase subunit SecA from Aliivibrio fischeri (strain MJ11) (Vibrio fischeri).